A 457-amino-acid polypeptide reads, in one-letter code: MPLSLPLHIVILAAGEGKRMKSALPKVLHPIAGKPMLAHVITTARALTPDAIHVVYGHAGNQVRAAFADQTDLHWVEQTQQLGTGHAVKQTMSAIPNAANVLVLYGDVPLIRAETLQRLPRASTPIAVLVTELANPAGYGHIVRNSEGKVAAIIEDKDADEEQRRIHTVNTGILCAESTALRRWLSKLSNTNMQGEYYLTDIFASATADLTPANMIMVTDAQEVEGVNDLWQLTQLERAWQIRAARALCLQGARVADPARLDQRGTIRIGQNVHIDIDVVLEGEIELGDNVVIGPFVRLKNVKLGPGTKVHAHCDLEGVTTTGSALIGPFARLRPETMLADGVHIGNFVETKNTSIGADSKANHLTYLGDAQIGTKVNIGAGTITCNYDGVNKSITLIGDGAFIGSHSALIAPVSVGAGATLGAGTVLTHDAPAHQLTVARARQTTLDGWQRPKKKT.

A pyrophosphorylase region spans residues 1 to 230 (MPLSLPLHIV…AQEVEGVNDL (230 aa)). Residues 12-15 (LAAG), K26, Q78, 83-84 (GT), 105-107 (YGD), G140, E155, N170, and N228 each bind UDP-N-acetyl-alpha-D-glucosamine. Mg(2+) is bound at residue D107. A Mg(2+)-binding site is contributed by N228. Residues 231–251 (WQLTQLERAWQIRAARALCLQ) form a linker region. The N-acetyltransferase stretch occupies residues 252–457 (GARVADPARL…DGWQRPKKKT (206 aa)). R334 and K352 together coordinate UDP-N-acetyl-alpha-D-glucosamine. H364 functions as the Proton acceptor in the catalytic mechanism. Y367 and N378 together coordinate UDP-N-acetyl-alpha-D-glucosamine. Acetyl-CoA-binding positions include A381, 387–388 (NY), S406, A424, and R441.

The protein in the N-terminal section; belongs to the N-acetylglucosamine-1-phosphate uridyltransferase family. This sequence in the C-terminal section; belongs to the transferase hexapeptide repeat family. In terms of assembly, homotrimer. It depends on Mg(2+) as a cofactor.

It is found in the cytoplasm. The catalysed reaction is alpha-D-glucosamine 1-phosphate + acetyl-CoA = N-acetyl-alpha-D-glucosamine 1-phosphate + CoA + H(+). The enzyme catalyses N-acetyl-alpha-D-glucosamine 1-phosphate + UTP + H(+) = UDP-N-acetyl-alpha-D-glucosamine + diphosphate. The protein operates within nucleotide-sugar biosynthesis; UDP-N-acetyl-alpha-D-glucosamine biosynthesis; N-acetyl-alpha-D-glucosamine 1-phosphate from alpha-D-glucosamine 6-phosphate (route II): step 2/2. Its pathway is nucleotide-sugar biosynthesis; UDP-N-acetyl-alpha-D-glucosamine biosynthesis; UDP-N-acetyl-alpha-D-glucosamine from N-acetyl-alpha-D-glucosamine 1-phosphate: step 1/1. It functions in the pathway bacterial outer membrane biogenesis; LPS lipid A biosynthesis. Catalyzes the last two sequential reactions in the de novo biosynthetic pathway for UDP-N-acetylglucosamine (UDP-GlcNAc). The C-terminal domain catalyzes the transfer of acetyl group from acetyl coenzyme A to glucosamine-1-phosphate (GlcN-1-P) to produce N-acetylglucosamine-1-phosphate (GlcNAc-1-P), which is converted into UDP-GlcNAc by the transfer of uridine 5-monophosphate (from uridine 5-triphosphate), a reaction catalyzed by the N-terminal domain. The polypeptide is Bifunctional protein GlmU (Xylella fastidiosa (strain M23)).